The following is a 369-amino-acid chain: 4-hydroxy-3-methylbut-2-en-1-yl diphosphate synthase (flavodoxin) (369 aa).

Cys-270, Cys-273, Cys-305, and Glu-312 together coordinate [4Fe-4S] cluster.

It belongs to the IspG family. [4Fe-4S] cluster serves as cofactor.

The catalysed reaction is (2E)-4-hydroxy-3-methylbut-2-enyl diphosphate + oxidized [flavodoxin] + H2O + 2 H(+) = 2-C-methyl-D-erythritol 2,4-cyclic diphosphate + reduced [flavodoxin]. It functions in the pathway isoprenoid biosynthesis; isopentenyl diphosphate biosynthesis via DXP pathway; isopentenyl diphosphate from 1-deoxy-D-xylulose 5-phosphate: step 5/6. Functionally, converts 2C-methyl-D-erythritol 2,4-cyclodiphosphate (ME-2,4cPP) into 1-hydroxy-2-methyl-2-(E)-butenyl 4-diphosphate. In Pseudomonas entomophila (strain L48), this protein is 4-hydroxy-3-methylbut-2-en-1-yl diphosphate synthase (flavodoxin).